The sequence spans 40 residues: Photosystem II reaction center protein J (40 aa).

A helical transmembrane segment spans residues 8–28 (IPLWVVATIAGLGVITVVGIF).

Belongs to the PsbJ family. As to quaternary structure, PSII is composed of 1 copy each of membrane proteins PsbA, PsbB, PsbC, PsbD, PsbE, PsbF, PsbH, PsbI, PsbJ, PsbK, PsbL, PsbM, PsbT, PsbX, PsbY, PsbZ, Psb30/Ycf12, peripheral proteins PsbO, CyanoQ (PsbQ), PsbU, PsbV and a large number of cofactors. It forms dimeric complexes.

It is found in the cellular thylakoid membrane. Its function is as follows. One of the components of the core complex of photosystem II (PSII). PSII is a light-driven water:plastoquinone oxidoreductase that uses light energy to abstract electrons from H(2)O, generating O(2) and a proton gradient subsequently used for ATP formation. It consists of a core antenna complex that captures photons, and an electron transfer chain that converts photonic excitation into a charge separation. The sequence is that of Photosystem II reaction center protein J from Trichormus variabilis (strain ATCC 29413 / PCC 7937) (Anabaena variabilis).